A 185-amino-acid polypeptide reads, in one-letter code: Transcription termination/antitermination protein NusG (185 aa).

The KOW domain maps to 134-163; that stretch reads VGQQVRIVEGPFATFSGEVEEVMSERNKVR.

The protein belongs to the NusG family.

In terms of biological role, participates in transcription elongation, termination and antitermination. This chain is Transcription termination/antitermination protein NusG, found in Treponema pallidum (strain Nichols).